The chain runs to 204 residues: MGSTEDELRAMARDLQLPRFLGTFDKSFPGFLQESQRCCAIVNTAARHTGGRHWLAVAWEPASRTFYFFDPFGFSDRELAQVYDFEYQRLLRKSAIQSTPDRCLTLVKSTQSVQGPHSAACGLFCLLFLAAFARYPDSPMAYNPVMDLVEGVDNERLFDADVQPIFRANQEACYAFLARHSAYFRAHRHAIMEQTHLHKALDMQ.

Active-site residues include H53, D70, and C121.

Belongs to the peptidase C5 family. Interacts with protease cofactor pVI-C; this interaction is necessary for protease activation.

The protein resides in the virion. It is found in the host nucleus. The catalysed reaction is Cleaves proteins of the adenovirus and its host cell at two consensus sites: -Yaa-Xaa-Gly-Gly-|-Xaa- and -Yaa-Xaa-Gly-Xaa-|-Gly- (in which Yaa is Met, Ile or Leu, and Xaa is any amino acid).. Its activity is regulated as follows. Requires DNA and protease cofactor for maximal activation. Inside nascent virions, becomes partially activated by binding to the viral DNA, allowing it to cleave the cofactor that binds to the protease and fully activates it. Actin, like the viral protease cofactor, seems to act as a cofactor in the cleavage of cytokeratin 18 and of actin itself. In terms of biological role, cleaves viral precursor proteins (pTP, pIIIa, pVI, pVII, pVIII, and pX) inside newly assembled particles giving rise to mature virions. Protease complexed to its cofactor slides along the viral DNA to specifically locate and cleave the viral precursors. Mature virions have a weakened organization compared to the unmature virions, thereby facilitating subsequent uncoating. Without maturation, the particle lacks infectivity and is unable to uncoat. Late in adenovirus infection, in the cytoplasm, may participate in the cytoskeleton destruction. Cleaves host cell cytoskeletal keratins K7 and K18. The polypeptide is Protease (Porcine adenovirus A serotype 3 (PAdV-3)).